The chain runs to 875 residues: Metal transporter CNNM2 (875 aa).

At 1 to 250 the chain is on the extracellular side; sequence MIGCGACEPE…TKMIVGEEKK (250 aa). N-linked (GlcNAc...) asparagine glycosylation occurs at Asn-112. The interval 121-149 is disordered; that stretch reads TEHERRRHTPSERGLGGPAPPEPDSGPQR. A helical transmembrane segment spans residues 251–271; it reads FLLPFWLQVIFISLLLCLSGM. The CNNM transmembrane domain occupies 251-431; it reads FLLPFWLQVI…DPYNDLVKEE (181 aa). Over 272 to 313 the chain is Cytoplasmic; it reads FSGLNLGLMALDPMELRIVQNCGTEKEKNYAKRIEPVRRQGN. An intramembrane region (helical) is located at residues 314–334; it reads YLLCSLLLGNVLVNTTLTILL. Residues 335–338 are Cytoplasmic-facing; that stretch reads DDIA. Residues 339 to 359 traverse the membrane as a helical segment; the sequence is GSGLVAVVVSTIGIVIFGEIV. The Extracellular portion of the chain corresponds to 360–368; sequence PQAICSRHG. A helical membrane pass occupies residues 369–389; that stretch reads LAVGANTIFLTKFFMMMTFPA. Topologically, residues 390-875 are cytoplasmic; the sequence is SYPVSKLLDC…NHSLHSEGAI (486 aa). 2 consecutive CBS domains span residues 450 to 511 and 518 to 584; these read MTPL…CTPL and YNHP…ILDE. The disordered stretch occupies residues 741–763; the sequence is AGSPGENKSPPRPCGLNHSDSLS. The residue at position 761 (Ser-761) is a Phosphoserine.

This sequence belongs to the ACDP family. In terms of assembly, isoform 1 and isoform 2 may interact with each other. Post-translationally, the N-terminus is cleaved within the endoplasmic reticulum. The signal peptidase complex seems to be involved in the processing, but the exact cleavage site has not been identified. As to expression, widely expressed, with highest levels in kidney, lung, spleen and testis. In the kidney, predominantly expressed in the distal convoluted tubule and, at lower levels, in the connecting tubule (at protein level).

The protein resides in the cell membrane. In terms of biological role, divalent metal cation transporter. Mediates transport of divalent metal cations in an order of Mg(2+) &gt; Co(2+) &gt; Mn(2+) &gt; Sr(2+) &gt; Ba(2+) &gt; Cu(2+) &gt; Fe(2+). The chain is Metal transporter CNNM2 (Cnnm2) from Mus musculus (Mouse).